Reading from the N-terminus, the 345-residue chain is Sesquiterpene synthase PILCRDRAFT_825684 (345 aa).

Mg(2+) is bound by residues aspartate 91, asparagine 226, serine 230, and glutamate 234. The DDXXD motif motif lies at 91–95 (DELTD). 2 residues coordinate (2E,6E)-farnesyl diphosphate: arginine 316 and tyrosine 317.

The protein belongs to the terpene synthase family. It depends on Mg(2+) as a cofactor.

It carries out the reaction (2E,6E)-farnesyl diphosphate = viridiflorene + diphosphate. Terpene cyclase that catalyzes the cyclization of farnesyl diphosphate (FPP) to various sesquiterpenes, including beta-elemene, viridiflorene and gamma-cadinene. Gamma-cadinene is the major product of PILCRDRAFT_825684. In Piloderma croceum (strain F 1598), this protein is Sesquiterpene synthase PILCRDRAFT_825684.